A 479-amino-acid chain; its full sequence is Sulfate adenylyltransferase subunit 1 (479 aa).

In terms of domain architecture, tr-type G spans 25 to 239; sequence KSLLRFLTCG…EVLETVDIQR (215 aa). Residues 34–41 form a G1 region; sequence GSVDDGKS. 34–41 provides a ligand contact to GTP; that stretch reads GSVDDGKS. Residues 92–96 form a G2 region; the sequence is GITID. The G3 stretch occupies residues 113 to 116; it reads DTPG. GTP contacts are provided by residues 113–117 and 168–171; these read DTPGH and NKMD. The tract at residues 168 to 171 is G4; it reads NKMD. Positions 206–208 are G5; sequence SAL.

It belongs to the TRAFAC class translation factor GTPase superfamily. Classic translation factor GTPase family. CysN/NodQ subfamily. As to quaternary structure, heterodimer composed of CysD, the smaller subunit, and CysN.

It carries out the reaction sulfate + ATP + H(+) = adenosine 5'-phosphosulfate + diphosphate. It functions in the pathway sulfur metabolism; hydrogen sulfide biosynthesis; sulfite from sulfate: step 1/3. Its function is as follows. With CysD forms the ATP sulfurylase (ATPS) that catalyzes the adenylation of sulfate producing adenosine 5'-phosphosulfate (APS) and diphosphate, the first enzymatic step in sulfur assimilation pathway. APS synthesis involves the formation of a high-energy phosphoric-sulfuric acid anhydride bond driven by GTP hydrolysis by CysN coupled to ATP hydrolysis by CysD. This Salmonella gallinarum (strain 287/91 / NCTC 13346) protein is Sulfate adenylyltransferase subunit 1.